The sequence spans 397 residues: Phosphoglycerate kinase (397 aa).

Residues 21–23 (DFN), Arg37, 60–63 (HLGR), Arg119, and Arg152 contribute to the substrate site. Residues Lys203, Gly294, Glu325, and 354 to 357 (GGDS) contribute to the ATP site.

The protein belongs to the phosphoglycerate kinase family. In terms of assembly, monomer.

The protein localises to the cytoplasm. The enzyme catalyses (2R)-3-phosphoglycerate + ATP = (2R)-3-phospho-glyceroyl phosphate + ADP. Its pathway is carbohydrate degradation; glycolysis; pyruvate from D-glyceraldehyde 3-phosphate: step 2/5. This is Phosphoglycerate kinase from Chlorobium phaeobacteroides (strain BS1).